We begin with the raw amino-acid sequence, 266 residues long: Ras-like protein family member 12 (266 aa).

Residues glycine 27 to serine 34, aspartate 74 to leucine 78, and asparagine 134 to aspartate 137 contribute to the GTP site.

The protein belongs to the small GTPase superfamily. Ras family.

The enzyme catalyses GTP + H2O = GDP + phosphate + H(+). This chain is Ras-like protein family member 12 (Rasl12), found in Mus musculus (Mouse).